The sequence spans 370 residues: MNQNSIRIKIKLAHNPYEVVIKKNGLARIGEELKKIGFKKATKVLVVTNKDVSVHYGKEFIHNLSDNGFNPTLIEIKAGEERKNLATISDIHNAAYTSRLERGSLMIALGGGVIGDMTGFAAATWLRGVSFVQVPTTLLAMVDASVGGKTGVNHPKGKNLIGAFHQPKLVLIDPITLKTLPEREFKAGMAEVIKYGVISDKKLFRKLEDAPRLDKLETLTDRFLLEIIQRSVQTKAHIVELDEREGGIRAVLNYGHTFGHAIEALCGYGTWLHGEAVSMGMIAIGQLALERNIWNISDLERQRKVLCQAGLPTIWPRVCAEDVIEILKSDKKVKDGEINFIVPTEIGKVEIIKNFTVNEIKQALQKLASK.

NAD(+) contacts are provided by residues 112–116 (GVIGD), 136–137 (TT), K149, K158, and 176–179 (TLKT). Residues E191, H256, and H273 each contribute to the Zn(2+) site.

Belongs to the sugar phosphate cyclases superfamily. Dehydroquinate synthase family. Requires Co(2+) as cofactor. Zn(2+) serves as cofactor. NAD(+) is required as a cofactor.

It is found in the cytoplasm. It carries out the reaction 7-phospho-2-dehydro-3-deoxy-D-arabino-heptonate = 3-dehydroquinate + phosphate. Its pathway is metabolic intermediate biosynthesis; chorismate biosynthesis; chorismate from D-erythrose 4-phosphate and phosphoenolpyruvate: step 2/7. Catalyzes the conversion of 3-deoxy-D-arabino-heptulosonate 7-phosphate (DAHP) to dehydroquinate (DHQ). This chain is 3-dehydroquinate synthase, found in Prochlorococcus marinus (strain MIT 9211).